We begin with the raw amino-acid sequence, 92 residues long: Co-chaperonin GroES (92 aa).

Belongs to the GroES chaperonin family. In terms of assembly, heptamer of 7 subunits arranged in a ring. Interacts with the chaperonin GroEL.

Its subcellular location is the cytoplasm. Its function is as follows. Together with the chaperonin GroEL, plays an essential role in assisting protein folding. The GroEL-GroES system forms a nano-cage that allows encapsulation of the non-native substrate proteins and provides a physical environment optimized to promote and accelerate protein folding. GroES binds to the apical surface of the GroEL ring, thereby capping the opening of the GroEL channel. This Thermotoga petrophila (strain ATCC BAA-488 / DSM 13995 / JCM 10881 / RKU-1) protein is Co-chaperonin GroES.